Consider the following 280-residue polypeptide: Fe-S cluster assembly protein DRE2 (280 aa).

Residues 1-121 form an N-terminal SAM-like domain region; the sequence is MSNLLVFDNS…TTLLKKSGGG (121 aa). The segment at 122–176 is linker; it reads PKKFAFKRASPATAAPSTNGTNPAATVNLNSVVTLSMDDDDLMDEDDLMEDDTNL. Residues C186, C198, C201, and C203 each contribute to the [2Fe-2S] cluster site. The interval 186-203 is fe-S binding site A; it reads CDPGPGKKRRKACKDCTC. The [4Fe-4S] cluster site is built by C244, C247, C255, and C258. 2 consecutive short sequence motifs (cx2C motif) follow at residues 244-247 and 255-258; these read CGSC and CDGC. Residues 244–258 are fe-S binding site B; that stretch reads CGSCALGDAFRCDGC.

Belongs to the anamorsin family. Monomer. Interacts with TAH18. Interacts with MIA40. It depends on [2Fe-2S] cluster as a cofactor. The cofactor is [4Fe-4S] cluster.

It is found in the cytoplasm. The protein resides in the mitochondrion intermembrane space. Component of the cytosolic iron-sulfur (Fe-S) protein assembly (CIA) machinery required for the maturation of extramitochondrial Fe-S proteins. Part of an electron transfer chain functioning in an early step of cytosolic Fe-S biogenesis, facilitating the de novo assembly of a [4Fe-4S] cluster on the scaffold complex CFD1-NBP35. Electrons are transferred to DRE2 from NADPH via the FAD- and FMN-containing protein TAH18. TAH18-DRE2 are also required for the assembly of the diferric tyrosyl radical cofactor of ribonucleotide reductase (RNR), probably by providing electrons for reduction during radical cofactor maturation in the catalytic small subunit RNR2. This is Fe-S cluster assembly protein DRE2 from Yarrowia lipolytica (strain CLIB 122 / E 150) (Yeast).